A 513-amino-acid polypeptide reads, in one-letter code: GMP synthase [glutamine-hydrolyzing] (513 aa).

The region spanning 9 to 198 (LILVLDFGSQ…VRRVCDCIGE (190 aa)) is the Glutamine amidotransferase type-1 domain. Cys-86 functions as the Nucleophile in the catalytic mechanism. Residues His-172 and Glu-174 contribute to the active site. The 190-residue stretch at 199–388 (WSMENFIEIE…LGIPEHLVWR (190 aa)) folds into the GMPS ATP-PPase domain. Position 226–232 (226–232 (SGGVDSS)) interacts with ATP.

Homodimer.

The enzyme catalyses XMP + L-glutamine + ATP + H2O = GMP + L-glutamate + AMP + diphosphate + 2 H(+). It functions in the pathway purine metabolism; GMP biosynthesis; GMP from XMP (L-Gln route): step 1/1. Catalyzes the synthesis of GMP from XMP. This Staphylococcus saprophyticus subsp. saprophyticus (strain ATCC 15305 / DSM 20229 / NCIMB 8711 / NCTC 7292 / S-41) protein is GMP synthase [glutamine-hydrolyzing].